We begin with the raw amino-acid sequence, 389 residues long: Chalcone synthase 6 (389 aa).

C164 is a catalytic residue.

The protein belongs to the thiolase-like superfamily. Chalcone/stilbene synthases family.

The catalysed reaction is (E)-4-coumaroyl-CoA + 3 malonyl-CoA + 3 H(+) = 2',4,4',6'-tetrahydroxychalcone + 3 CO2 + 4 CoA. Its pathway is secondary metabolite biosynthesis; flavonoid biosynthesis. Its function is as follows. The primary product of this enzyme is 4,2',4',6'-tetrahydroxychalcone (also termed naringenin-chalcone or chalcone) which can under specific conditions spontaneously isomerize into naringenin. The chain is Chalcone synthase 6 (CHS6) from Trifolium subterraneum (Subterranean clover).